Consider the following 210-residue polypeptide: Frataxin, mitochondrial (210 aa).

A mitochondrion-targeting transit peptide spans 1-41 (MWTLGRRAVAGLLASPSPAQAQTLTRVPRPAELAPLCGRRG).

Belongs to the frataxin family. Component of the mitochondrial core iron-sulfur cluster (ISC) complex composed of NFS1, LYRM4, NDUFAB1, ISCU, FXN, and FDX2; this complex is a heterohexamer containing two copies of each monomer. Homodimer. Monomer (probable predominant form). Oligomer. Monomers and polymeric aggregates of &gt;1 MDa have been isolated from mitochondria. A small fraction of heterologous overexpressed recombinant frataxin forms high-molecular weight aggregates that incorporate iron. Interacts with LYRM4. Interacts (via ferrous form) with ISCU; the interaction is possible when both are bound to the dimeric form of the cysteine desulfurase complex (NFS1:LYRM4) and the interaction enhances FXN interaction to the dimeric form of the cysteine desulfurase complex (NFS1:LYRM4). Interacts with FECH; one iron-bound FXN monomer seems to interact with a FECH homodimer. Interacts with SDHA and SDHB. Interacts with ACO2; the interaction is dependent on citrate. Interacts with HSPA9. As to quaternary structure, interacts with ACO1. Interacts with ISCU (cytoplasmic form). Processed in two steps by mitochondrial processing peptidase (MPP). MPP first cleaves the precursor to intermediate form and subsequently converts the intermediate to yield frataxin mature form (frataxin(81-210)) which is the predominant form. The additional forms, frataxin(56-210) and frataxin(78-210), seem to be produced when the normal maturation process is impaired; their physiological relevance is unsure. Expressed in the heart, peripheral blood lymphocytes and dermal fibroblasts.

Its subcellular location is the mitochondrion. It is found in the cytoplasm. The protein localises to the cytosol. It catalyses the reaction 4 Fe(2+) + O2 + 4 H(+) = 4 Fe(3+) + 2 H2O. Functions as an activator of persulfide transfer to the scaffoding protein ISCU as component of the core iron-sulfur cluster (ISC) assembly complex and participates to the [2Fe-2S] cluster assembly. Accelerates sulfur transfer from NFS1 persulfide intermediate to ISCU and to small thiols such as L-cysteine and glutathione leading to persulfuration of these thiols and ultimately sulfide release. Binds ferrous ion and is released from FXN upon the addition of both L-cysteine and reduced FDX2 during [2Fe-2S] cluster assembly. The core iron-sulfur cluster (ISC) assembly complex is involved in the de novo synthesis of a [2Fe-2S] cluster, the first step of the mitochondrial iron-sulfur protein biogenesis. This process is initiated by the cysteine desulfurase complex (NFS1:LYRM4:NDUFAB1) that produces persulfide which is delivered on the scaffold protein ISCU in a FXN-dependent manner. Then this complex is stabilized by FDX2 which provides reducing equivalents to accomplish the [2Fe-2S] cluster assembly. Finally, the [2Fe-2S] cluster is transferred from ISCU to chaperone proteins, including HSCB, HSPA9 and GLRX5. May play a role in the protection against iron-catalyzed oxidative stress through its ability to catalyze the oxidation of Fe(2+) to Fe(3+); the oligomeric form but not the monomeric form has in vitro ferroxidase activity. May be able to store large amounts of iron in the form of a ferrihydrite mineral by oligomerization; however, the physiological relevance is unsure as reports are conflicting and the function has only been shown using heterologous overexpression systems. May function as an iron chaperone protein that protects the aconitase [4Fe-4S]2+ cluster from disassembly and promotes enzyme reactivation. May play a role as a high affinity iron binding partner for FECH that is capable of both delivering iron to ferrochelatase and mediating the terminal step in mitochondrial heme biosynthesis. Functionally, modulates the RNA-binding activity of ACO1. May be involved in the cytoplasmic iron-sulfur protein biogenesis. May contribute to oxidative stress resistance and overall cell survival. This chain is Frataxin, mitochondrial, found in Homo sapiens (Human).